A 505-amino-acid polypeptide reads, in one-letter code: AMP phosphorylase 2 (505 aa).

AMP is bound by residues Gly-169, 195-200 (SRAITT), Thr-204, Ser-265, and Lys-289.

The protein belongs to the thymidine/pyrimidine-nucleoside phosphorylase family. Type 2 subfamily.

The enzyme catalyses AMP + phosphate = alpha-D-ribose 1,5-bisphosphate + adenine. It catalyses the reaction CMP + phosphate = cytosine + alpha-D-ribose 1,5-bisphosphate. The catalysed reaction is UMP + phosphate = alpha-D-ribose 1,5-bisphosphate + uracil. Functionally, catalyzes the conversion of AMP and phosphate to adenine and ribose 1,5-bisphosphate (R15P). Exhibits phosphorylase activity toward CMP and UMP in addition to AMP. Functions in an archaeal AMP degradation pathway, together with R15P isomerase and RubisCO. This is AMP phosphorylase 2 from Archaeoglobus fulgidus (strain ATCC 49558 / DSM 4304 / JCM 9628 / NBRC 100126 / VC-16).